Consider the following 387-residue polypeptide: 26S proteasome regulatory subunit 6B homolog (387 aa).

An ATP-binding site is contributed by 175-182; that stretch reads GPPGTGKT.

It belongs to the AAA ATPase family. As to quaternary structure, the 26S proteasome consists of a 20S proteasome core and two 19S regulatory subunits. The 20S proteasome core is composed of 28 subunits that are arranged in four stacked rings, resulting in a barrel-shaped structure. The two end rings are each formed by seven alpha subunits, and the two central rings are each formed by seven beta subunits. The catalytic chamber with the active sites is on the inside of the barrel.

It localises to the cytoplasm. Its subcellular location is the nucleus. Acts as a regulatory subunit of the 26S proteasome which degrades poly-ubiquitinated proteins in the cytoplasm and in the nucleus. It is essential for the regulated turnover of proteins and for the removal of misfolded proteins. The proteasome is a multicatalytic proteinase complex that is characterized by its ability to cleave peptides with Arg, Phe, Tyr, Leu, and Glu adjacent to the leaving group at neutral or slightly basic pH. The protein is 26S proteasome regulatory subunit 6B homolog of Encephalitozoon cuniculi (strain GB-M1) (Microsporidian parasite).